A 657-amino-acid polypeptide reads, in one-letter code: Outer dense fiber protein 2 (657 aa).

2 positions are modified to phosphoserine: Ser-73 and Ser-74. Thr-92 carries the phosphothreonine modification. Ser-95 bears the Phosphoserine; by TSSK4 mark. Phosphoserine is present on residues Ser-106 and Ser-109. The residue at position 110 (Thr-110) is a Phosphothreonine. Residues Ser-115 and Ser-129 each carry the phosphoserine modification. Lys-138 participates in a covalent cross-link: Glycyl lysine isopeptide (Lys-Gly) (interchain with G-Cter in SUMO2). Phosphoserine is present on Ser-139. Coiled coils occupy residues 144-423 (QKGE…AEQL) and 461-635 (EIIV…SDLR). Thr-231 is subject to Phosphothreonine. Residues Ser-261 and Ser-632 each carry the phosphoserine modification.

This sequence belongs to the ODF2 family. Self-associates. Associates with microtubules and forms a fibrillar structure partially linked to the microtubule network. Interacts via its C-terminus with PLK1. Interacts with ODF1. Interacts with MARK4; the interaction is required for localization of ODF2 to centrioles. Interacts with TSSK4. Interacts with AKNA. Interacts with CFAP58. Interacts with BBOF1. Interacts with CCDC38. Interacts with CCDC42. Post-translationally, tyrosine phosphorylated. Phosphorylated on Ser-95 by TSSK4.

Its subcellular location is the cytoplasm. The protein localises to the cytoskeleton. It localises to the microtubule organizing center. It is found in the centrosome. The protein resides in the cell projection. Its subcellular location is the cilium. The protein localises to the centriole. It localises to the spindle pole. It is found in the flagellum. Its function is as follows. Seems to be a major component of sperm tail outer dense fibers (ODF). ODFs are filamentous structures located on the outside of the axoneme in the midpiece and principal piece of the mammalian sperm tail and may help to maintain the passive elastic structures and elastic recoil of the sperm tail. May have a modulating influence on sperm motility. Functions as a general scaffold protein that is specifically localized at the distal/subdistal appendages of mother centrioles. Component of the centrosome matrix required for the localization of PLK1 and NIN to the centrosomes. Required for the formation and/or maintenance of normal CETN1 assembly. This Bos taurus (Bovine) protein is Outer dense fiber protein 2 (ODF2).